The sequence spans 501 residues: Protein YLS7 (501 aa).

Residues 25-45 (IAFAIGGLTSFVIFASLLLFT) form a helical; Signal-anchor for type II membrane protein membrane-spanning segment. Residues 69–131 (HSIHDPDRNP…NVSIDEEATQ (63 aa)) are disordered. Residues 78–89 (PSPVSSSESPPV) are compositionally biased toward low complexity. Basic and acidic residues predominate over residues 94 to 113 (SDDKVLPKGSHDSNDVRLGE). A compositionally biased stretch (polar residues) spans 114-124 (ETNSGKSSNVS). The short motif at 211 to 213 (GDS) is the GDS motif element. The segment at 438–467 (RHDGHPGPYRSPDPKKITKRGPDGQPPPQD) is disordered. Over residues 449–459 (PDPKKITKRGP) the composition is skewed to basic and acidic residues. Positions 467–481 (DCLHWCMPGPVDTWN) match the DCXHWCLPGXXDXWN motif motif.

It belongs to the PC-esterase family. TBL subfamily. In terms of tissue distribution, expressed in roots, cauline leaves and flowers.

Its subcellular location is the membrane. Functionally, may act as a bridging protein that binds pectin and other cell wall polysaccharides. Probably involved in maintaining esterification of pectins. May be involved in the specific O-acetylation of cell wall polymers. This is Protein YLS7 (YLS7) from Arabidopsis thaliana (Mouse-ear cress).